A 340-amino-acid polypeptide reads, in one-letter code: tRNA-cytidine(32) 2-sulfurtransferase (340 aa).

The PP-loop motif signature appears at 74–79 (SGGKDS). The [4Fe-4S] cluster site is built by C149, C152, and C240.

It belongs to the TtcA family. As to quaternary structure, homodimer. It depends on Mg(2+) as a cofactor. [4Fe-4S] cluster is required as a cofactor.

The protein resides in the cytoplasm. It carries out the reaction cytidine(32) in tRNA + S-sulfanyl-L-cysteinyl-[cysteine desulfurase] + AH2 + ATP = 2-thiocytidine(32) in tRNA + L-cysteinyl-[cysteine desulfurase] + A + AMP + diphosphate + H(+). The protein operates within tRNA modification. In terms of biological role, catalyzes the ATP-dependent 2-thiolation of cytidine in position 32 of tRNA, to form 2-thiocytidine (s(2)C32). The sulfur atoms are provided by the cysteine/cysteine desulfurase (IscS) system. This chain is tRNA-cytidine(32) 2-sulfurtransferase, found in Burkholderia ambifaria (strain MC40-6).